The sequence spans 260 residues: Salicylic acid-binding protein 2 (260 aa).

Salicylate is bound by residues Ala13, Ser81, and Lys159. Residue Ser81 is the Acyl-ester intermediate of the active site. Catalysis depends on charge relay system residues Asp210 and His238. Salicylate contacts are provided by His238, Leu253, and His257.

Belongs to the AB hydrolase superfamily. Methylesterase family.

It carries out the reaction methyl salicylate + H2O = salicylate + methanol + H(+). It participates in plant hormone biosynthesis. With respect to regulation, esterase activity is down-regulated by salicylic acid (SA) or by tetraFA, a synthetic SA analog. Required to convert methyl salicylate (MeSA) to salicylic acid (SA) as part of the signal transduction pathways that activate systemic acquired resistance in systemic tissue. MeSA is believed to be an inactive form that needs to be demethylated to exert a biological effect. Also able to catalyze the conversion of acibenzolar-S-methyl into acibenzolar to induce systemic acquired resistance. The sequence is that of Salicylic acid-binding protein 2 from Nicotiana tabacum (Common tobacco).